We begin with the raw amino-acid sequence, 516 residues long: Monocarboxylate transporter 12 (516 aa).

Topologically, residues 1–50 are cytoplasmic; that stretch reads MPSGSHWTANSSKIITWLLEQPGKEEKRKTMAKVNRARSTSPPDGGWGWM. Transmembrane regions (helical) follow at residues 51–73, 88–108, 116–136, 145–165, 178–198, 207–227, 283–303, 319–339, 350–370, 377–397, 410–430, and 440–460; these read IVAG…SIFF, AWIH…GSVV, VGIM…SFAT, LGVL…AMVG, IAMS…QLLI, LLIL…MRPI, FVVL…LFVY, AFLM…FGWL, YVCY…LPML, VPFS…IPVV, ALGV…PIAG, and TAAF…LGFA. Topologically, residues 461–516 are cytoplasmic; that stretch reads RLIKRMRKTQLQFIAKESDPKLQLWTNGSVAYSVARELDQKHGEPVATAVPGYSLT.

Belongs to the major facilitator superfamily. Monocarboxylate porter (TC 2.A.1.13) family. Interacts with isoform 2 of BSG; this interaction is required for its localization to the plasma membrane. In terms of tissue distribution, most highly expressed in kidney, followed by retina, lung, heart and testis. Very weakly expressed in brain and liver. Also detected in lens.

The protein resides in the cell membrane. It is found in the basolateral cell membrane. The enzyme catalyses creatine(in) = creatine(out). The catalysed reaction is guanidinoacetate(in) = guanidinoacetate(out). Its activity is regulated as follows. Creatine uptake is inhibited by carbonyl cyanide 3-chlorophenylhydrazone (CCCP) and by valinomycin. Functions as a transporter for creatine and as well for its precursor guanidinoacetate. Transport of creatine and GAA is independent of resting membrane potential and extracellular Na(+), Cl(-), or pH. Contributes to the process of creatine biosynthesis and distribution. This is Monocarboxylate transporter 12 from Homo sapiens (Human).